We begin with the raw amino-acid sequence, 231 residues long: Thrombin-like enzyme leucurobin (231 aa).

A Peptidase S1 domain is found at 1–223; that stretch reads VIGGDECDIN…YLPWIQSIIA (223 aa). 6 cysteine pairs are disulfide-bonded: cysteine 7/cysteine 139, cysteine 26/cysteine 42, cysteine 74/cysteine 230, cysteine 118/cysteine 184, cysteine 150/cysteine 163, and cysteine 174/cysteine 199. Active-site charge relay system residues include histidine 41 and aspartate 86. An N-linked (GlcNAc...) asparagine glycan is attached at asparagine 146. Serine 178 functions as the Charge relay system in the catalytic mechanism. N-linked (GlcNAc...) asparagine glycosylation occurs at asparagine 225.

It belongs to the peptidase S1 family. Snake venom subfamily. As to quaternary structure, monomer. In terms of processing, glycosylated. In terms of tissue distribution, expressed by the venom gland.

The protein resides in the secreted. It carries out the reaction Selective cleavage of Arg-|-Xaa bond in fibrinogen, to form fibrin, and release fibrinopeptide A. The specificity of further degradation of fibrinogen varies with species origin of the enzyme.. Its activity is regulated as follows. Inhibited by PMSF and benzamidine. Its clotting effect is strongly inhibited by antibothropic serum. Is not inhibited by heparin. Functionally, thrombin-like snake venom serine protease that cleaves Arg-Gly bonds in alpha-chain of fibrinogen (FGA). Induces temporary episodes of opisthotonos and rapid rolling around the long axis of the animal (gyroxin-like effect), when injected into the tail veins of mice (0.143 ug/g mouse). This is Thrombin-like enzyme leucurobin from Bothrops leucurus (Whitetail lancehead).